The sequence spans 227 residues: MIMSFFDQFLSPSFLGIPLIALAISIPWLMFPTPTNRWLNNRLLTLQAWFINRFIYQLMQPMNLGGHKWAILFTALMLFLITINLLGLLPYTFTPTTQLSLNMAFALPLWLTTVLIGMFNQPTIALGHLLPEGTPTPLVPVLIIIETISLFIRPLALGVRLTANLTAGHLLMQLIATAAFVLLTMMPTVALLTSLVLFLLTILEVAVAMIQAYVFVLLLSLYLQENV.

6 consecutive transmembrane segments (helical) span residues 14-34 (FLGIPLIALAISIPWLMFPTP), 69-89 (WAILFTALMLFLITINLLGLL), 99-119 (LSLNMAFALPLWLTTVLIGMF), 139-159 (VPVLIIIETISLFIRPLALGV), 165-185 (LTAGHLLMQLIATAAFVLLTM), and 190-210 (ALLTSLVLFLLTILEVAVAMI).

It belongs to the ATPase A chain family. As to quaternary structure, component of the ATP synthase complex composed at least of ATP5F1A/subunit alpha, ATP5F1B/subunit beta, ATP5MC1/subunit c (homooctomer), MT-ATP6/subunit a, MT-ATP8/subunit 8, ATP5ME/subunit e, ATP5MF/subunit f, ATP5MG/subunit g, ATP5MK/subunit k, ATP5MJ/subunit j, ATP5F1C/subunit gamma, ATP5F1D/subunit delta, ATP5F1E/subunit epsilon, ATP5PF/subunit F6, ATP5PB/subunit b, ATP5PD/subunit d, ATP5PO/subunit OSCP. ATP synthase complex consists of a soluble F(1) head domain (subunits alpha(3) and beta(3)) - the catalytic core - and a membrane F(0) domain - the membrane proton channel (subunits c, a, 8, e, f, g, k and j). These two domains are linked by a central stalk (subunits gamma, delta, and epsilon) rotating inside the F1 region and a stationary peripheral stalk (subunits F6, b, d, and OSCP). Interacts with DNAJC30; interaction is direct.

It localises to the mitochondrion inner membrane. It carries out the reaction H(+)(in) = H(+)(out). Functionally, subunit a, of the mitochondrial membrane ATP synthase complex (F(1)F(0) ATP synthase or Complex V) that produces ATP from ADP in the presence of a proton gradient across the membrane which is generated by electron transport complexes of the respiratory chain. ATP synthase complex consist of a soluble F(1) head domain - the catalytic core - and a membrane F(1) domain - the membrane proton channel. These two domains are linked by a central stalk rotating inside the F(1) region and a stationary peripheral stalk. During catalysis, ATP synthesis in the catalytic domain of F(1) is coupled via a rotary mechanism of the central stalk subunits to proton translocation. With the subunit c (ATP5MC1), forms the proton-conducting channel in the F(0) domain, that contains two crucial half-channels (inlet and outlet) that facilitate proton movement from the mitochondrial intermembrane space (IMS) into the matrix. Protons are taken up via the inlet half-channel and released through the outlet half-channel, following a Grotthuss mechanism. The protein is ATP synthase F(0) complex subunit a of Scyliorhinus canicula (Small-spotted catshark).